The primary structure comprises 79 residues: Antimicrobial peptide ToAP2 (79 aa).

The N-terminal stretch at 1 to 23 (MQFKKQLLVIFFAYFLVVNESEA) is a signal peptide. Positions 50–79 (SLMKRELKNLYDPYQRSVEMERLLKELPLY) are excised as a propeptide.

The protein belongs to the non-disulfide-bridged peptide (NDBP) superfamily. Medium-length antimicrobial peptide (group 3) family. As to expression, expressed by the venom gland.

It is found in the secreted. The protein resides in the target cell membrane. In terms of biological role, antimicrobial peptide. Shows antibacterial activity against all M.massiliense bacterial strains tested. Has antifungal activity against Candida spp. and two Cryptococcus neoformans strains with MICs values ranging from 6.25 to 200 uM. Also shows an inhibitory activity on C.albicans biofilms at high concentrations. Exhibits chemotactic activity for monocytes, neutrophils, and eosinophils. Shows low cytotoxic activity and has weak hemolytic activity on human erythrocytes. In vivo, treatment of infected mice with M.massiliense reduces the bacterial load in the liver, lung, and spleen. May act by disrupting the integrity of the bacterial cell membrane. This Tityus obscurus (Amazonian scorpion) protein is Antimicrobial peptide ToAP2.